A 195-amino-acid polypeptide reads, in one-letter code: Probable nicotinate-nucleotide adenylyltransferase (195 aa).

Belongs to the NadD family.

It carries out the reaction nicotinate beta-D-ribonucleotide + ATP + H(+) = deamido-NAD(+) + diphosphate. Its pathway is cofactor biosynthesis; NAD(+) biosynthesis; deamido-NAD(+) from nicotinate D-ribonucleotide: step 1/1. Functionally, catalyzes the reversible adenylation of nicotinate mononucleotide (NaMN) to nicotinic acid adenine dinucleotide (NaAD). This chain is Probable nicotinate-nucleotide adenylyltransferase, found in Opitutus terrae (strain DSM 11246 / JCM 15787 / PB90-1).